The chain runs to 159 residues: D-aminoacyl-tRNA deacylase (159 aa).

The short motif at 146 to 147 (GP) is the Gly-cisPro motif, important for rejection of L-amino acids element.

This sequence belongs to the DTD family. As to quaternary structure, homodimer.

The protein localises to the cytoplasm. It catalyses the reaction glycyl-tRNA(Ala) + H2O = tRNA(Ala) + glycine + H(+). It carries out the reaction a D-aminoacyl-tRNA + H2O = a tRNA + a D-alpha-amino acid + H(+). Functionally, an aminoacyl-tRNA editing enzyme that deacylates mischarged D-aminoacyl-tRNAs. Also deacylates mischarged glycyl-tRNA(Ala), protecting cells against glycine mischarging by AlaRS. Acts via tRNA-based rather than protein-based catalysis; rejects L-amino acids rather than detecting D-amino acids in the active site. By recycling D-aminoacyl-tRNA to D-amino acids and free tRNA molecules, this enzyme counteracts the toxicity associated with the formation of D-aminoacyl-tRNA entities in vivo and helps enforce protein L-homochirality. The polypeptide is D-aminoacyl-tRNA deacylase (Bifidobacterium animalis subsp. lactis (strain AD011)).